The primary structure comprises 470 residues: 3-isopropylmalate dehydratase large subunit (470 aa).

The interval 50 to 121 is disordered; that stretch reads NVARGCQHRH…PCGRPGAGRH (72 aa). Residues C349, C409, and C412 each contribute to the [4Fe-4S] cluster site.

Belongs to the aconitase/IPM isomerase family. LeuC type 1 subfamily. Heterodimer of LeuC and LeuD. It depends on [4Fe-4S] cluster as a cofactor.

The enzyme catalyses (2R,3S)-3-isopropylmalate = (2S)-2-isopropylmalate. It functions in the pathway amino-acid biosynthesis; L-leucine biosynthesis; L-leucine from 3-methyl-2-oxobutanoate: step 2/4. Catalyzes the isomerization between 2-isopropylmalate and 3-isopropylmalate, via the formation of 2-isopropylmaleate. This is 3-isopropylmalate dehydratase large subunit from Azotobacter vinelandii.